Reading from the N-terminus, the 662-residue chain is MGLYRIRVSTGASLYAGSNNQVQLWLVGQHGEAALGTRLWPARGKETELKVEVPEYLGPLLFVKLRKRHLLTDDAWFCNWISVQGPGAGDEVRFPCYRWVEGNGVLSLPEGTGRTVGDDPQGLFQKHREEELEERRKLYRWGNWKDGLILNVAGAKLCDLPVDERFLEDKRVDFEVSLAKGLADLAIKDSLNVLTCWKDLDDFNRIFWCGQSKLAERVRDSWKEDALFGYQFLNGANPVVLRRSVHLPARLVFPPGMEELQAQLEKELEGGTLFEADFSLLDGIKANVILCSQQHLAAPLVMLKLQPDGKLLPMVIQLQLPSTGSPPPPLFLPTDPPMAWLLAKCWVRSSDFQLHELQSHLLRGHLMAEVIVVATMRCLPSIHPIFKLIIPHLRYTLEINVRARTGLVSDMGIFDQIMSTGGGGHVQLLKQAGAFLTYSSFCPPDDLADRGLLGVKSSFYAQDALRLWEIIYRYVEGIVSLHYKTDVAVKDDPELQTWCREITEIGLQGAQDRGFPVSLQSRDQVCHFVTMCIFTCTGQHASVHLGQLDWYSWVPNAPCTMRLPPPTTKDATLETVMATLPNFHQASLQMSITWQLGRRQPVMVAVGQHEEEYFSGPEPKAVLKKFREELAALDKEIEIRNAKLDMPYEYLRPSIVENSVAI.

In terms of domain architecture, PLAT spans 2–114; that stretch reads GLYRIRVSTG…VLSLPEGTGR (113 aa). One can recognise a Lipoxygenase domain in the interval 115–662; it reads TVGDDPQGLF…PSIVENSVAI (548 aa). Positions 360, 365, 540, 544, and 662 each coordinate Fe cation.

This sequence belongs to the lipoxygenase family. Interacts with PEBP1; in response to IL13/interleukin-13, prevents the interaction of PEBP1 with RAF1 to activate the ERK signaling cascade. Fe cation serves as cofactor.

Its subcellular location is the cytoplasm. The protein resides in the cytosol. It is found in the cell membrane. The protein localises to the lipid droplet. It catalyses the reaction (5Z,8Z,11Z,14Z)-eicosatetraenoate + O2 = (12S)-hydroperoxy-(5Z,8Z,10E,14Z)-eicosatetraenoate. It carries out the reaction (9Z,12Z)-octadecadienoate + O2 = (13S)-hydroperoxy-(9Z,11E)-octadecadienoate. The catalysed reaction is (5Z,8Z,11Z,14Z)-eicosatetraenoate + O2 = (15S)-hydroperoxy-(5Z,8Z,11Z,13E)-eicosatetraenoate. The enzyme catalyses (5Z,8Z,11Z,14Z)-eicosatetraenoate + 2 O2 = (14R,15S)-dihydroperoxy-(5Z,8Z,10E,12E)-eicosatetraenoate. It catalyses the reaction (5Z,8Z,11Z,14Z)-eicosatetraenoate + 2 O2 = (8S,15S)-dihydroperoxy-(5Z,9E,11Z,13E)-eicosatetraenoate. It carries out the reaction (14S,15R)-epoxy-(5Z,8Z,11Z)-eicosatrienoate + O2 = (8S)-hydroperoxy-(14S,15R)-epoxy-(5Z,9E,11Z)-eicosatrienoate. The catalysed reaction is (14S,15R)-epoxy-(5Z,8Z,11Z)-eicosatrienoate + O2 = (12S)-hydroperoxy-(14S,15R)-epoxy-(5Z,8Z,10E)-eicosatrienoate. The enzyme catalyses (14R,15S)-epoxy-(5Z,8Z,11Z)-eicosatrienoate + O2 = (5S)-hydroperoxy-(14R,15S)-epoxy-(6E,8Z,11Z)-eicosatrienoate. It catalyses the reaction (14R,15S)-epoxy-(5Z,8Z,11Z)-eicosatrienoate + O2 = (12S)-hydroperoxy-(14R,15S)-epoxy-(5Z,8Z,10E)-eicosatrienoate. It carries out the reaction (15R)-hydroperoxy-(5Z,8Z,11Z,13E)-eicosatetraenoate = 15-oxo-(5Z,8Z,11Z,13E)-eicosatetraenoate + H2O. The catalysed reaction is (15S)-hydroperoxy-(5Z,8Z,11Z,13E)-eicosatetraenoate = (14S,15S)-epoxy-(5Z,8Z,10E,12E)-eicosatetraenoate + H2O. The enzyme catalyses (12S)-hydroperoxy-(5Z,8Z,10E,14Z)-eicosatetraenoate = (8S)-hydroxy-(11S,12S)-epoxy-(5Z,9E,14Z)-eicosatrienoate. It catalyses the reaction (4Z,7Z,10Z,13Z,16Z)-docosapentaenoate + O2 = 14-hydroperoxy-(4Z,7Z,10Z,12E,16Z)-docosapentaenoate. It carries out the reaction (7Z,10Z,13Z,16Z,19Z)-docosapentaenoate + O2 = 14-hydroperoxy-(7Z,10Z,12E,16Z,19Z)-docosapentaenoate. The catalysed reaction is (4Z,7Z,10Z,13Z,16Z,19Z)-docosahexaenoate + O2 = (14S)-hydroperoxy-(4Z,7Z,10Z,12E,16Z,19Z)-docosahexaenoate. The enzyme catalyses (4Z,7Z,10Z,13Z,16Z,19Z)-docosahexaenoate + O2 = (17S)-hydroperoxy-(4Z,7Z,10Z,13Z,15E,19Z)-docosahexaenoate. It catalyses the reaction (7S)-hydroperoxy-(4Z,8E,10Z,13Z,16Z,19Z)-docosahexaenoate + O2 = (7S,14S)-dihydroperoxy-(4Z,8E,10Z,12E,16Z,19Z)-docosahexaenoate. It carries out the reaction (7S)-hydroperoxy-(4Z,8E,10Z,13Z,16Z,19Z)-docosahexaenoate + O2 = (7S,17S)-dihydroperoxy-(4Z,8E,10Z,13Z,15E,19Z)-docosahexaenoate. The catalysed reaction is (4Z,7Z,10Z,13Z,16Z,19Z)-docosahexaenoate + O2 = (11S)-hydroperoxy-(4Z,7Z,9E,13Z,16Z,19Z)-docosahexaenoate. The enzyme catalyses N-(5Z,8Z,11Z,14Z)-eicosatetraenoyl-taurine + O2 = N-(12S)-hydroperoxy-(5Z,8Z,10E,14Z)-eicosatetraenoyl-taurine. It catalyses the reaction N-(5Z,8Z,11Z,14Z)-eicosatetraenoyl-gamma-aminobutanoate + O2 = N-(12S)-hydroperoxy-(5Z,8Z,10E,14Z)-eicosatetraenoyl-gamma-aminobutanoate. It carries out the reaction N-(5Z,8Z,11Z,14Z)-eicosatetraenoyl-glycine + O2 = N-(12S)-hydroperoxy-(5Z,8Z,10E,14Z)-eicosatetraenoyl-glycine. The catalysed reaction is N-(5Z,8Z,11Z,14Z)-eicosatetraenoyl-L-alanine + O2 = N-(12S)-hydroperoxy-(5Z,8Z,10E,14Z)-eicosatetraenoyl-alanine. The enzyme catalyses N-(5Z,8Z,11Z,14Z)-eicosatetraenoyl-taurine + O2 = N-(15S)-hydroperoxy-(5Z,8Z,11Z,13E)-eicosatetraenoyl-taurine. It catalyses the reaction N-(5Z,8Z,11Z,14Z)-eicosatetraenoyl-gamma-aminobutanoate + O2 = N-(15S)-hydroperoxy-(5Z,8Z,11Z,13E)-eicosatetraenoyl-gamma-aminobutanoate. It carries out the reaction N-(5Z,8Z,11Z,14Z)-eicosatetraenoyl-glycine + O2 = N-(15S)-hydroperoxy-(5Z,8Z,11Z,13E)-eicosatetraenoyl-glycine. The catalysed reaction is N-(5Z,8Z,11Z,14Z)-eicosatetraenoyl-L-alanine + O2 = N-(15S)-hydroperoxy-(5Z,8Z,11Z,13E)-eicosatetraenoyl-alanine. Its pathway is lipid metabolism; hydroperoxy eicosatetraenoic acid biosynthesis. Non-heme iron-containing dioxygenase that catalyzes the stereo-specific peroxidation of free and esterified polyunsaturated fatty acids generating a spectrum of bioactive lipid mediators. It inserts peroxyl groups at C12 or C15 of arachidonate ((5Z,8Z,11Z,14Z)-eicosatetraenoate) producing both 12-hydroperoxyeicosatetraenoate/12-HPETE and 15-hydroperoxyeicosatetraenoate/15-HPETE. It may then act on 12-HPETE to produce hepoxilins, which may show pro-inflammatory properties. Can also peroxidize linoleate ((9Z,12Z)-octadecadienoate) to 13-hydroperoxyoctadecadienoate. May participate in the sequential oxidations of DHA ((4Z,7Z,10Z,13Z,16Z,19Z)-docosahexaenoate) to generate specialized pro-resolving mediators (SPMs)like resolvin D5 ((7S,17S)-diHPDHA) and (7S,14S)-diHPDHA, that actively down-regulate the immune response and have anti-aggregation properties with platelets. Can convert epoxy fatty acids to hydroperoxy-epoxides derivatives followed by an intramolecular nucleophilic substitution leading to the formation of monocyclic endoperoxides. Plays an important role during the maintenance of self-tolerance by peroxidizing membrane-bound phosphatidylethanolamine which can then signal the sorting process for clearance of apoptotic cells during inflammation and prevent an autoimmune response. In addition to its role in the immune and inflammatory responses, this enzyme may play a role in epithelial wound healing in the cornea through production of lipoxin A4 (LXA(4)) and docosahexaenoic acid-derived neuroprotectin D1 (NPD1; 10R,17S-HDHA), both lipid autacoids exhibit anti-inflammatory and neuroprotective properties. Furthermore, it may regulate actin polymerization which is crucial for several biological processes such as the phagocytosis of apoptotic cells. It is also implicated in the generation of endogenous ligands for peroxisome proliferator activated receptor (PPAR-gamma), hence modulating macrophage development and function. It may also exert a negative effect on skeletal development by regulating bone mass through this pathway. As well as participates in ER stress and downstream inflammation in adipocytes, pancreatic islets, and liver. Finally, it is also involved in the cellular response to IL13/interleukin-13. The sequence is that of Polyunsaturated fatty acid lipoxygenase ALOX15 from Pongo abelii (Sumatran orangutan).